Consider the following 195-residue polypeptide: Probable nicotinate-nucleotide adenylyltransferase (195 aa).

This sequence belongs to the NadD family.

It carries out the reaction nicotinate beta-D-ribonucleotide + ATP + H(+) = deamido-NAD(+) + diphosphate. The protein operates within cofactor biosynthesis; NAD(+) biosynthesis; deamido-NAD(+) from nicotinate D-ribonucleotide: step 1/1. Catalyzes the reversible adenylation of nicotinate mononucleotide (NaMN) to nicotinic acid adenine dinucleotide (NaAD). The protein is Probable nicotinate-nucleotide adenylyltransferase of Mesorhizobium japonicum (strain LMG 29417 / CECT 9101 / MAFF 303099) (Mesorhizobium loti (strain MAFF 303099)).